Reading from the N-terminus, the 37-residue chain is Large ribosomal subunit protein bL36c (37 aa).

The protein belongs to the bacterial ribosomal protein bL36 family.

The protein localises to the plastid. The protein resides in the chloroplast. The polypeptide is Large ribosomal subunit protein bL36c (Phalaenopsis aphrodite subsp. formosana (Moth orchid)).